The following is a 100-amino-acid chain: Large ribosomal subunit protein bL21 (100 aa).

This sequence belongs to the bacterial ribosomal protein bL21 family. As to quaternary structure, part of the 50S ribosomal subunit. Contacts protein L20.

In terms of biological role, this protein binds to 23S rRNA in the presence of protein L20. This Corynebacterium urealyticum (strain ATCC 43042 / DSM 7109) protein is Large ribosomal subunit protein bL21.